The primary structure comprises 448 residues: Putative sodium-coupled neutral amino acid transporter 11 (448 aa).

The tract at residues 1–20 is disordered; the sequence is MESERSCLLSSHDAGKGGSS. 11 consecutive transmembrane segments (helical) span residues 22–42, 52–72, 94–114, 143–163, 165–185, 200–220, 246–266, 286–306, 324–344, 346–366, and 389–409; these read VSSA…IGLP, MGLL…ILLV, IGYI…MISY, FVIA…RDIA, LGKV…TVVV, AWVF…FALI, ISVG…YATF, TFGR…ECFV, SSHV…SLSY, CLGI…MFIF, and MILV…ALFP. 3 N-linked (GlcNAc...) asparagine glycosylation sites follow: Asn425, Asn440, and Asn444.

This sequence belongs to the amino acid/polyamine transporter 2 family.

It localises to the membrane. Putative sodium-dependent amino acid/proton antiporter. The chain is Putative sodium-coupled neutral amino acid transporter 11 (slc38a11) from Danio rerio (Zebrafish).